A 241-amino-acid chain; its full sequence is Attacin-C (241 aa).

The first 21 residues, 1 to 21, serve as a signal peptide directing secretion; sequence MSKIVLLIVVIVGVLGSLAVA. A propeptide spanning residues 22 to 23 is cleaved from the precursor; the sequence is LP. Gln-24 bears the Pyrrolidone carboxylic acid mark. The O-linked (GalNAc...) threonine glycan is linked to Thr-39. Ser-127 is subject to Phosphoserine.

Belongs to the attacin/sarcotoxin-2 family. In terms of tissue distribution, hemolymph (at protein level).

Its subcellular location is the secreted. Its function is as follows. Has antimicrobial activity in synergy with other peptides. Strongest activity observed against E.cloacae. The sequence is that of Attacin-C from Drosophila melanogaster (Fruit fly).